The sequence spans 300 residues: Inosose dehydratase (300 aa).

This sequence belongs to the IolE/MocC family. It depends on glutathione as a cofactor. Requires Co(2+) as cofactor. The cofactor is Mn(2+).

It catalyses the reaction scyllo-inosose = 3D-3,5/4-trihydroxycyclohexane-1,2-dione + H2O. Catalyzes the dehydration of inosose (2-keto-myo-inositol, 2KMI or 2,4,6/3,5-pentahydroxycyclohexanone) to 3D-(3,5/4)-trihydroxycyclohexane-1,2-dione (D-2,3-diketo-4-deoxy-epi-inositol). The chain is Inosose dehydratase from Mesomycoplasma hyopneumoniae (strain J / ATCC 25934 / NCTC 10110) (Mycoplasma hyopneumoniae).